Here is a 247-residue protein sequence, read N- to C-terminus: Adenosylcobinamide-GDP ribazoletransferase (247 aa).

5 helical membrane-spanning segments follow: residues 34–54, 59–79, 113–133, 138–158, and 194–214; these read IITF…VFMV, CGAP…TGGF, GGLA…ELAL, ILAS…LLMY, and VLLP…AIFI.

This sequence belongs to the CobS family. Requires Mg(2+) as cofactor.

The protein resides in the cell inner membrane. The catalysed reaction is alpha-ribazole + adenosylcob(III)inamide-GDP = adenosylcob(III)alamin + GMP + H(+). The enzyme catalyses alpha-ribazole 5'-phosphate + adenosylcob(III)inamide-GDP = adenosylcob(III)alamin 5'-phosphate + GMP + H(+). It participates in cofactor biosynthesis; adenosylcobalamin biosynthesis; adenosylcobalamin from cob(II)yrinate a,c-diamide: step 7/7. Its function is as follows. Joins adenosylcobinamide-GDP and alpha-ribazole to generate adenosylcobalamin (Ado-cobalamin). Also synthesizes adenosylcobalamin 5'-phosphate from adenosylcobinamide-GDP and alpha-ribazole 5'-phosphate. The sequence is that of Adenosylcobinamide-GDP ribazoletransferase from Escherichia coli O81 (strain ED1a).